The sequence spans 302 residues: 1D-myo-inositol 2-acetamido-2-deoxy-alpha-D-glucopyranoside deacetylase (302 aa).

Zn(2+) is bound by residues His13, Asp16, and His155.

This sequence belongs to the MshB deacetylase family. The cofactor is Zn(2+).

The enzyme catalyses 1D-myo-inositol 2-acetamido-2-deoxy-alpha-D-glucopyranoside + H2O = 1D-myo-inositol 2-amino-2-deoxy-alpha-D-glucopyranoside + acetate. Its function is as follows. Catalyzes the deacetylation of 1D-myo-inositol 2-acetamido-2-deoxy-alpha-D-glucopyranoside (GlcNAc-Ins) in the mycothiol biosynthesis pathway. This Nocardioides sp. (strain ATCC BAA-499 / JS614) protein is 1D-myo-inositol 2-acetamido-2-deoxy-alpha-D-glucopyranoside deacetylase.